Consider the following 354-residue polypeptide: Ferredoxin--NADP reductase (354 aa).

Positions 42, 50, 55, 95, 130, 299, and 339 each coordinate FAD.

The protein belongs to the ferredoxin--NADP reductase type 2 family. As to quaternary structure, homodimer. The cofactor is FAD.

The enzyme catalyses 2 reduced [2Fe-2S]-[ferredoxin] + NADP(+) + H(+) = 2 oxidized [2Fe-2S]-[ferredoxin] + NADPH. This Acidovorax sp. (strain JS42) protein is Ferredoxin--NADP reductase.